Here is a 732-residue protein sequence, read N- to C-terminus: E3 ubiquitin-protein ligase TRIM56 (732 aa).

The RING-type zinc-finger motif lies at Cys-21 to Arg-60. The B box-type zinc-finger motif lies at Arg-164 to Leu-205. Residues Cys-169, His-172, Cys-192, and His-197 each contribute to the Zn(2+) site. Residues Ala-211–Glu-286 adopt a coiled-coil conformation. Basic and acidic residues predominate over residues Leu-374–Ala-384. The interval Leu-374–Ser-462 is disordered. Residues Gly-389–Gln-405 show a composition bias toward polar residues. A Phosphothreonine modification is found at Thr-402. The span at Asp-407–Arg-416 shows a compositional bias: basic and acidic residues. Thr-419 is subject to Phosphothreonine. Over residues Ser-434–Ser-446 the composition is skewed to basic residues. A Phosphoserine modification is found at Ser-452.

It belongs to the TRIM/RBCC family. As to quaternary structure, interacts with STING1. Interacts with TICAM1.

It is found in the cytoplasm. The enzyme catalyses S-ubiquitinyl-[E2 ubiquitin-conjugating enzyme]-L-cysteine + [acceptor protein]-L-lysine = [E2 ubiquitin-conjugating enzyme]-L-cysteine + N(6)-ubiquitinyl-[acceptor protein]-L-lysine.. The protein operates within protein modification; protein ubiquitination. Its function is as follows. E3 ubiquitin-protein ligase that plays a key role in innate antiviral immunity by mediating ubiquitination of CGAS and STING1. In response to pathogen- and host-derived double-stranded DNA (dsDNA), targets STING1 to 'Lys-63'-linked ubiquitination, thereby promoting its homodimerization, a step required for the production of type I interferon IFN-beta. Also mediate monoubiquitination of CGAS, thereby promoting CGAS oligomerization and subsequent activation. Independently of its E3 ubiquitin ligase activity, positive regulator of TLR3 signaling. Potentiates extracellular double stranded RNA (dsRNA)-induced expression of IFNB1 and interferon-stimulated genes ISG15, IFIT1/ISG56, CXCL10, OASL and CCL5/RANTES. Restricts bovine viral diarrhea virus (BVDV) replication. This is E3 ubiquitin-protein ligase TRIM56 from Bos taurus (Bovine).